We begin with the raw amino-acid sequence, 374 residues long: Putative glutamate--cysteine ligase 2 (374 aa).

This sequence belongs to the glutamate--cysteine ligase type 2 family. YbdK subfamily.

The catalysed reaction is L-cysteine + L-glutamate + ATP = gamma-L-glutamyl-L-cysteine + ADP + phosphate + H(+). Its function is as follows. ATP-dependent carboxylate-amine ligase which exhibits weak glutamate--cysteine ligase activity. This Leptothrix cholodnii (strain ATCC 51168 / LMG 8142 / SP-6) (Leptothrix discophora (strain SP-6)) protein is Putative glutamate--cysteine ligase 2.